Consider the following 315-residue polypeptide: BTB/POZ domain-containing adapter for CUL3-mediated RhoA degradation protein 3 (315 aa).

M1 is subject to N-acetylmethionine. S23 bears the Phosphoserine mark. The 69-residue stretch at 32-100 (KYVKLNVGGA…LRDGGVPLPE (69 aa)) folds into the BTB domain. The PCNA-binding motif lies at 239–245 (QTKVEFP). Residues 269-294 (NALLEATGGAAGRSHHLDEDEERERE) are disordered.

This sequence belongs to the BACURD family. In terms of assembly, homotetramer; forms a two-fold symmetric tetramer in solution. Interacts with CUL3; interaction is direct and forms a 5:5 heterodecamer. Component of the BCR(BACURD3) E3 ubiquitin ligase complex, at least composed of CUL3, KCTD10/BACURD3 and RBX1. Interacts with DNA polymerase delta subunit 2/POLD2. Interacts with PCNA. Associated with the tectonic-like complex (also named B9 complex); however as Kctd10 has not been identified in all tectonic-like complexes purifications it is unclear whether it is really part of the complex.

The protein resides in the nucleus. Its pathway is protein modification; protein ubiquitination. Its function is as follows. Substrate-specific adapter of a BCR (BTB-CUL3-RBX1) E3 ubiquitin-protein ligase complex. The BCR(BACURD3) E3 ubiquitin ligase complex mediates the ubiquitination of target proteins, leading to their degradation by the proteasome. The chain is BTB/POZ domain-containing adapter for CUL3-mediated RhoA degradation protein 3 (Kctd10) from Mus musculus (Mouse).